Here is a 639-residue protein sequence, read N- to C-terminus: Probable potassium transport system protein Kup 1 (639 aa).

Residues 1-16 show a composition bias toward polar residues; the sequence is MALANTGSEAEPVEQS. Residues 1–21 are disordered; that stretch reads MALANTGSEAEPVEQSSHPEI. Transmembrane regions (helical) follow at residues 29 to 49, 67 to 87, 117 to 137, 154 to 174, 182 to 202, 220 to 240, 260 to 280, 302 to 322, 354 to 374, 383 to 403, 411 to 431, and 436 to 456; these read LMLG…IYAF, ILGV…IKYI, AVIL…AVIT, PTFQ…VFAV, VGLV…LSGL, IVAF…AIFL, IVLA…AGQG, ALIP…QAVI, IYMP…VVGF, AYGI…YVVM, LWVA…FFAS, and VFEG…GMWT.

This sequence belongs to the HAK/KUP transporter (TC 2.A.72) family.

The protein resides in the cell inner membrane. It carries out the reaction K(+)(in) + H(+)(in) = K(+)(out) + H(+)(out). Its function is as follows. Transport of potassium into the cell. Likely operates as a K(+):H(+) symporter. This chain is Probable potassium transport system protein Kup 1, found in Mesorhizobium japonicum (strain LMG 29417 / CECT 9101 / MAFF 303099) (Mesorhizobium loti (strain MAFF 303099)).